The primary structure comprises 155 residues: Ribosomal RNA large subunit methyltransferase H (155 aa).

Residues Leu-72, Gly-103, and 122 to 127 (LSALTL) each bind S-adenosyl-L-methionine.

The protein belongs to the RNA methyltransferase RlmH family. As to quaternary structure, homodimer.

The protein resides in the cytoplasm. It carries out the reaction pseudouridine(1915) in 23S rRNA + S-adenosyl-L-methionine = N(3)-methylpseudouridine(1915) in 23S rRNA + S-adenosyl-L-homocysteine + H(+). Functionally, specifically methylates the pseudouridine at position 1915 (m3Psi1915) in 23S rRNA. The sequence is that of Ribosomal RNA large subunit methyltransferase H from Salmonella dublin (strain CT_02021853).